The primary structure comprises 740 residues: 1,4-alpha-glucan branching enzyme GlgB (740 aa).

D419 serves as the catalytic Nucleophile. The active-site Proton donor is the E472.

It belongs to the glycosyl hydrolase 13 family. GlgB subfamily. Monomer.

The catalysed reaction is Transfers a segment of a (1-&gt;4)-alpha-D-glucan chain to a primary hydroxy group in a similar glucan chain.. It participates in glycan biosynthesis; glycogen biosynthesis. Functionally, catalyzes the formation of the alpha-1,6-glucosidic linkages in glycogen by scission of a 1,4-alpha-linked oligosaccharide from growing alpha-1,4-glucan chains and the subsequent attachment of the oligosaccharide to the alpha-1,6 position. This Paramagnetospirillum magneticum (strain ATCC 700264 / AMB-1) (Magnetospirillum magneticum) protein is 1,4-alpha-glucan branching enzyme GlgB.